The sequence spans 298 residues: Protoheme IX farnesyltransferase (298 aa).

9 helical membrane passes run 23–43 (LLLL…GKPY), 47–67 (LVVL…NMYF), 93–113 (VFIA…RIIN), 115–135 (HFAL…TYLL), 143–163 (IIAG…AAAG), 169–189 (ALLF…FLAT), 211–231 (IAVA…IVGL), 236–256 (VIGT…FHLA), and 278–298 (MMLG…YIIS).

This sequence belongs to the UbiA prenyltransferase family. Protoheme IX farnesyltransferase subfamily.

The protein localises to the cell membrane. The catalysed reaction is heme b + (2E,6E)-farnesyl diphosphate + H2O = Fe(II)-heme o + diphosphate. The protein operates within porphyrin-containing compound metabolism; heme O biosynthesis; heme O from protoheme: step 1/1. In terms of biological role, converts heme B (protoheme IX) to heme O by substitution of the vinyl group on carbon 2 of heme B porphyrin ring with a hydroxyethyl farnesyl side group. This Hyperthermus butylicus (strain DSM 5456 / JCM 9403 / PLM1-5) protein is Protoheme IX farnesyltransferase.